The sequence spans 81 residues: Protein Vpu (81 aa).

The Extracellular segment spans residues 1–6; that stretch reads MQPIQI. A helical transmembrane segment spans residues 7–27; sequence AIAALVVAIIIAIVVWSIVII. Residues 28–81 are Cytoplasmic-facing; the sequence is EYRKILRQRKIDRLIDRLIERAEDSGNESEGEISALVEMGVEMGHHAPWDIDDL. Ser52 and Ser56 each carry phosphoserine; by host CK2.

The protein belongs to the HIV-1 VPU protein family. Homopentamer. Interacts with host CD4 and BRTC; these interactions induce proteasomal degradation of CD4. Interacts with host BST2; this interaction leads to the degradation of host BST2. Interacts with host FBXW11. Interacts with host AP1M1; this interaction plays a role in the mistrafficking and subsequent degradation of host BST2. Interacts with host RANBP2; this interaction allows Vpu to down-regulate host BLM sumoylation. Phosphorylated by host CK2. This phosphorylation is necessary for interaction with human BTRC and degradation of CD4.

It localises to the host membrane. Ion channel activity is inhibited by hexamethylene amiloride in vitro. Its function is as follows. Enhances virion budding by targeting host CD4 and Tetherin/BST2 to proteasome degradation. Degradation of CD4 prevents any unwanted premature interactions between viral Env and its host receptor CD4 in the endoplasmic reticulum. Degradation of antiretroviral protein Tetherin/BST2 is important for virion budding, as BST2 tethers new viral particles to the host cell membrane. Mechanistically, Vpu bridges either CD4 or BST2 to BTRC, a substrate recognition subunit of the Skp1/Cullin/F-box protein E3 ubiquitin ligase, induces their ubiquitination and subsequent proteasomal degradation. The alteration of the E3 ligase specificity by Vpu seems to promote the degradation of host IKBKB, leading to NF-kappa-B down-regulation and subsequent apoptosis. Acts as a viroporin that forms an oligomeric ion channel in membranes. Modulates the host DNA repair mechanisms to promote degradation of nuclear viral cDNA in cells that are already productively infected in order to suppress immune sensing and proviral hyper-integration (superinfection). Manipulates PML-NBs and modulates SUMOylation of host BLM protein thereby enhancing its DNA-end processing activity toward viral unintegrated linear DNA. Also inhibits RAD52-mediated homologous repair of viral cDNA, preventing the generation of dead-end circular forms of single copies of the long terminal repeat and permitting sustained nucleolytic attack. This chain is Protein Vpu, found in Homo sapiens (Human).